The following is a 1345-amino-acid chain: DNA-directed RNA polymerase subunit beta (1345 aa).

It belongs to the RNA polymerase beta chain family. The RNAP catalytic core consists of 2 alpha, 1 beta, 1 beta' and 1 omega subunit. When a sigma factor is associated with the core the holoenzyme is formed, which can initiate transcription.

It carries out the reaction RNA(n) + a ribonucleoside 5'-triphosphate = RNA(n+1) + diphosphate. DNA-dependent RNA polymerase catalyzes the transcription of DNA into RNA using the four ribonucleoside triphosphates as substrates. In Shewanella sp. (strain MR-4), this protein is DNA-directed RNA polymerase subunit beta.